A 206-amino-acid polypeptide reads, in one-letter code: MARYLGPKLKLSRREGTDLFLKSGVRAIDSKCKIDTAPGQHGARKPRLSDYGSQLREKQKVRRIYGILERQFRNYYKEANRLKGNTGENLLVLLEGRLDNVVYRMGFATTRAEARQLVSHKAIVVNGRVVNIPSFQVSVNDVVAIREKSKKQARIKASLELAEQREKPTWLEVDSAKMEGVFKRVPERSDLSADINEHLIVELYSK.

The S4 RNA-binding domain occupies 96-156 (GRLDNVVYRM…EKSKKQARIK (61 aa)).

Belongs to the universal ribosomal protein uS4 family. Part of the 30S ribosomal subunit. Contacts protein S5. The interaction surface between S4 and S5 is involved in control of translational fidelity.

Functionally, one of the primary rRNA binding proteins, it binds directly to 16S rRNA where it nucleates assembly of the body of the 30S subunit. In terms of biological role, with S5 and S12 plays an important role in translational accuracy. The sequence is that of Small ribosomal subunit protein uS4 from Haemophilus influenzae (strain ATCC 51907 / DSM 11121 / KW20 / Rd).